We begin with the raw amino-acid sequence, 268 residues long: AB hydrolase superfamily protein YisY (268 aa).

In terms of domain architecture, AB hydrolase-1 spans 23–254; the sequence is PIIFLHGWPL…NSGHGAFYEE (232 aa). Active-site residues include Ser-96, Asp-220, and His-248.

The protein belongs to the AB hydrolase superfamily.

This is AB hydrolase superfamily protein YisY (yisY) from Bacillus subtilis (strain 168).